The sequence spans 550 residues: Mitochondrial distribution and morphology protein 12 (550 aa).

An SMP-LTD domain is found at 1–550; sequence MSIELNWETL…VYPSFWTFLV (550 aa). Disordered stretches follow at residues 62–168, 218–356, and 474–493; these read ITDP…PQDL, PPQW…TKYR, and TLASPAGAAPGSDEKAGGNT. Residues 69-90 show a composition bias toward acidic residues; it reads FYEEDPDVDYDDEDEDVEETHD. Residues 125–140 show a composition bias toward low complexity; sequence VASSSSSSVGRGSAPR. Composition is skewed to polar residues over residues 148 to 157, 251 to 269, 278 to 289, and 296 to 323; these read PTKSNININT, PSHSRTSSTVSNADLQTAS, TPTSFLRSGQQT, and VSTLAPTSVGTSRPPTRDLTTTMSTAQE.

This sequence belongs to the MDM12 family. In terms of assembly, component of the ER-mitochondria encounter structure (ERMES) or MDM complex, composed of MMM1, MDM10, MDM12 and MDM34. An MMM1 homodimer associates with one molecule of MDM12 on each side in a pairwise head-to-tail manner, and the SMP-LTD domains of MMM1 and MDM12 generate a continuous hydrophobic tunnel for phospholipid trafficking.

It is found in the mitochondrion outer membrane. It localises to the endoplasmic reticulum membrane. Functionally, component of the ERMES/MDM complex, which serves as a molecular tether to connect the endoplasmic reticulum (ER) and mitochondria. Components of this complex are involved in the control of mitochondrial shape and protein biogenesis, and function in nonvesicular lipid trafficking between the ER and mitochondria. MDM12 is required for the interaction of the ER-resident membrane protein MMM1 and the outer mitochondrial membrane-resident beta-barrel protein MDM10. The MDM12-MMM1 subcomplex functions in the major beta-barrel assembly pathway that is responsible for biogenesis of all mitochondrial outer membrane beta-barrel proteins, and acts in a late step after the SAM complex. The MDM10-MDM12-MMM1 subcomplex further acts in the TOM40-specific pathway after the action of the MDM12-MMM1 complex. Essential for establishing and maintaining the structure of mitochondria and maintenance of mtDNA nucleoids. This chain is Mitochondrial distribution and morphology protein 12, found in Pyricularia oryzae (strain 70-15 / ATCC MYA-4617 / FGSC 8958) (Rice blast fungus).